Consider the following 427-residue polypeptide: Trigger factor (427 aa).

The PPIase FKBP-type domain occupies 165–250 (GDTVVIDFEG…LHEIQEQVPA (86 aa)).

Belongs to the FKBP-type PPIase family. Tig subfamily.

The protein localises to the cytoplasm. The catalysed reaction is [protein]-peptidylproline (omega=180) = [protein]-peptidylproline (omega=0). Its function is as follows. Involved in protein export. Acts as a chaperone by maintaining the newly synthesized protein in an open conformation. Functions as a peptidyl-prolyl cis-trans isomerase. This Sulfurovum sp. (strain NBC37-1) protein is Trigger factor.